Consider the following 383-residue polypeptide: tRNA-specific 2-thiouridylase MnmA (383 aa).

Residues 10–17 and Met36 contribute to the ATP site; that span reads AMSGGVDS. Cys107 acts as the Nucleophile in catalysis. Cys107 and Cys206 are joined by a disulfide. ATP is bound at residue Gly131. An interaction with tRNA region spans residues 155–157; sequence KDQ. Catalysis depends on Cys206, which acts as the Cysteine persulfide intermediate. The interaction with tRNA stretch occupies residues 315 to 316; sequence RY.

This sequence belongs to the MnmA/TRMU family.

Its subcellular location is the cytoplasm. It carries out the reaction S-sulfanyl-L-cysteinyl-[protein] + uridine(34) in tRNA + AH2 + ATP = 2-thiouridine(34) in tRNA + L-cysteinyl-[protein] + A + AMP + diphosphate + H(+). Catalyzes the 2-thiolation of uridine at the wobble position (U34) of tRNA, leading to the formation of s(2)U34. This chain is tRNA-specific 2-thiouridylase MnmA, found in Salinibacter ruber (strain DSM 13855 / M31).